Consider the following 128-residue polypeptide: Small ribosomal subunit protein eS8 (128 aa).

Residues 1–41 (MSYYQGNDSRKITGGQKGKNRDKRKYELGSPPTETKISDKD) are disordered.

Belongs to the eukaryotic ribosomal protein eS8 family. As to quaternary structure, part of the 30S ribosomal subunit.

The sequence is that of Small ribosomal subunit protein eS8 from Sulfolobus acidocaldarius (strain ATCC 33909 / DSM 639 / JCM 8929 / NBRC 15157 / NCIMB 11770).